The sequence spans 178 residues: UPF0215 protein STK_03040 (178 aa).

Belongs to the UPF0215 family.

The protein is UPF0215 protein STK_03040 of Sulfurisphaera tokodaii (strain DSM 16993 / JCM 10545 / NBRC 100140 / 7) (Sulfolobus tokodaii).